A 245-amino-acid chain; its full sequence is Polyhedrin (245 aa).

The tract at residues 32-35 (KRKK) is nuclear localization signal.

It belongs to the polyhedrin family.

It is found in the host nucleus. Major component of the virus occlusion bodies which are large proteinaceous structures termed polyhedra. These structures serve as the protective package for the virus particles outside the infected host and allow natural transmission of virus between insect hosts, assisting persistence in the environment. Forms the paracrystalline lattice of polyhedra and interacts with enveloped virions as well as other accessory molecules and structures to form a mature viral occlusion body. The chain is Polyhedrin (PH) from Lepidoptera (butterflies and moths).